Consider the following 541-residue polypeptide: Peptidyl-prolyl isomerase cwc-27 (541 aa).

In terms of domain architecture, PPIase cyclophilin-type spans 11-193; sequence PTASAIIHTT…YPIKITRIEI (183 aa). Disordered regions lie at residues 199–443 and 513–541; these read DDMQ…GQAD and TLKE…RDRH. 3 stretches are compositionally biased toward basic and acidic residues: residues 279–307, 316–348, and 361–374; these read AKRD…ESRR, QKKE…KTNE, and IHSE…KKSA. Over residues 432–442 the composition is skewed to acidic residues; it reads DVEDGEQDGQA. 2 stretches are compositionally biased toward basic and acidic residues: residues 513 to 525 and 532 to 541; these read TLKE…RDAK and AWDRGRRDRH.

The protein belongs to the cyclophilin-type PPIase family. CWC27 subfamily. Associated with the spliceosome.

It localises to the cytoplasm. It is found in the nucleus. The catalysed reaction is [protein]-peptidylproline (omega=180) = [protein]-peptidylproline (omega=0). In terms of biological role, PPIases accelerate the folding of proteins. It catalyzes the cis-trans isomerization of proline imidic peptide bonds in oligopeptides. Involved in pre-mRNA splicing. The protein is Peptidyl-prolyl isomerase cwc-27 (cwc-27) of Neurospora crassa (strain ATCC 24698 / 74-OR23-1A / CBS 708.71 / DSM 1257 / FGSC 987).